Here is a 191-residue protein sequence, read N- to C-terminus: Fe/S biogenesis protein NfuA (191 aa).

The [4Fe-4S] cluster site is built by cysteine 149 and cysteine 152.

The protein belongs to the NfuA family. Homodimer. [4Fe-4S] cluster serves as cofactor.

Its function is as follows. Involved in iron-sulfur cluster biogenesis. Binds a 4Fe-4S cluster, can transfer this cluster to apoproteins, and thereby intervenes in the maturation of Fe/S proteins. Could also act as a scaffold/chaperone for damaged Fe/S proteins. This Cronobacter sakazakii (strain ATCC BAA-894) (Enterobacter sakazakii) protein is Fe/S biogenesis protein NfuA.